A 237-amino-acid polypeptide reads, in one-letter code: Uridylate kinase (237 aa).

Residue 9–12 (KLSG) coordinates ATP. The interval 17–22 (GTQGYG) is involved in allosteric activation by GTP. A UMP-binding site is contributed by G51. The ATP site is built by G52 and R56. UMP contacts are provided by residues D71 and 132–139 (CGNPFFTT). T159, Y165, and D168 together coordinate ATP.

It belongs to the UMP kinase family. In terms of assembly, homohexamer.

The protein resides in the cytoplasm. The catalysed reaction is UMP + ATP = UDP + ADP. The protein operates within pyrimidine metabolism; CTP biosynthesis via de novo pathway; UDP from UMP (UMPK route): step 1/1. With respect to regulation, allosterically activated by GTP. Inhibited by UTP. In terms of biological role, catalyzes the reversible phosphorylation of UMP to UDP. This chain is Uridylate kinase, found in Parasynechococcus marenigrum (strain WH8102).